Consider the following 626-residue polypeptide: MTDAVSTTTLLKDRDRLEARLKEIPPEPGVYFMRDANDDILYIGKSKKLRNRVRSYFRQIQDHPPRIELMVHQVADIEFIVTDTEAEALALEANLIKQHQPHFNVLLKDDKKYPYLCVTWSQTYPRIFITRKRRLGKAQDKYYGPYVDVWQLRQTLRLVKRLFPLRQRRKPLFKDRPCLNYEIGRCPGVCQALITPEAYRQILQKVVMIFQGRTSELINTLSLQMEQAAEDLNFEQAARLRDQIKGLQGLGVDQKVALPDDTVSRDAIALAADDQIACVQLFQIRSGRLVGRLGFMADAQSGSLGMILQHVLEAHYGSAEPVELPLEILVQTELPETELLASYLSQRKERKVSITCPQRQIKAELIEMVERNAQYELARTQKSRDRTLNALQDLAELLDLPELPHRIECYDISHIQGSDAVASQVVFIDGLPAKQHYRRYKIRNPNVKAGHSDDFASLAEVLHRRFRQYHLSPEQPRQGTSDWPDLVVIDGGKGQLSAVLESLTKIEVVEDLQIISLAKQREEIFQPGESQPLPTDPEQPGVQLIRRLRDEAHRFAISFHRKKRLERMRRSRLDDIPGLGHHRQKELLAAFRSIDYIREASPEQLKAVPTIGPQLAQKIYDYFHPA.

A GIY-YIG domain is found at 26–105 (PEPGVYFMRD…IKQHQPHFNV (80 aa)). Positions 215-250 (SELINTLSLQMEQAAEDLNFEQAARLRDQIKGLQGL) constitute a UVR domain.

This sequence belongs to the UvrC family. Interacts with UvrB in an incision complex.

The protein localises to the cytoplasm. Functionally, the UvrABC repair system catalyzes the recognition and processing of DNA lesions. UvrC both incises the 5' and 3' sides of the lesion. The N-terminal half is responsible for the 3' incision and the C-terminal half is responsible for the 5' incision. This is UvrABC system protein C from Acaryochloris marina (strain MBIC 11017).